A 567-amino-acid chain; its full sequence is Proline--tRNA ligase (567 aa).

It belongs to the class-II aminoacyl-tRNA synthetase family. ProS type 1 subfamily. Homodimer.

Its subcellular location is the cytoplasm. The catalysed reaction is tRNA(Pro) + L-proline + ATP = L-prolyl-tRNA(Pro) + AMP + diphosphate. Its function is as follows. Catalyzes the attachment of proline to tRNA(Pro) in a two-step reaction: proline is first activated by ATP to form Pro-AMP and then transferred to the acceptor end of tRNA(Pro). As ProRS can inadvertently accommodate and process non-cognate amino acids such as alanine and cysteine, to avoid such errors it has two additional distinct editing activities against alanine. One activity is designated as 'pretransfer' editing and involves the tRNA(Pro)-independent hydrolysis of activated Ala-AMP. The other activity is designated 'posttransfer' editing and involves deacylation of mischarged Ala-tRNA(Pro). The misacylated Cys-tRNA(Pro) is not edited by ProRS. This Stenotrophomonas maltophilia (strain K279a) protein is Proline--tRNA ligase.